A 390-amino-acid polypeptide reads, in one-letter code: Leu/Ile/Val-binding protein homolog 6 (390 aa).

The signal sequence occupies residues 1-21 (MKKIALTALAVFSLAASAAYA).

This sequence belongs to the leucine-binding protein family.

Its function is as follows. Component of an amino-acid transport system. The chain is Leu/Ile/Val-binding protein homolog 6 from Brucella melitensis biotype 1 (strain ATCC 23456 / CCUG 17765 / NCTC 10094 / 16M).